The chain runs to 241 residues: Major prion protein (241 aa).

A signal peptide spans 1-15 (MLVLFVATWSDLGLC). The interval 16-31 (KKRPKPGGWNTGGSRY) is interaction with ADGRG6. The tract at residues 16 to 223 (KKRPKPGGWN…ESQAYYQRGS (208 aa)) is interaction with GRB2, ERI3 and SYN1. A disordered region spans residues 18-101 (RPKPGGWNTG…WHKPNKPKTS (84 aa)). 5 tandem repeats follow at residues 44–52 (PQGGGGWGQ), 53–60 (PHGGGWGQ), 61–68 (PHGGGWGQ), 69–76 (PHGGGWGQ), and 77–84 (PHGGGWGQ). Residues 44 to 84 (PQGGGGWGQPHGGGWGQPHGGGWGQPHGGGWGQPHGGGWGQ) form a 5 X 8 AA tandem repeats of P-H-G-G-G-W-G-Q region. The segment covering 45–88 (QGGGGWGQPHGGGWGQPHGGGWGQPHGGGWGQPHGGGWGQGGGT) has biased composition (gly residues). Residues histidine 54, glycine 55, glycine 56, histidine 62, glycine 63, glycine 64, histidine 70, glycine 71, glycine 72, histidine 78, glycine 79, and glycine 80 each contribute to the Cu(2+) site. Positions 91–101 (QWHKPNKPKTS) are enriched in basic residues. A disulfide bridge links cysteine 172 with cysteine 207. Asparagine 174 and asparagine 190 each carry an N-linked (GlcNAc...) asparagine glycan. The GPI-anchor amidated serine moiety is linked to residue serine 223. Positions 224–241 (SMVLFSSPPVILLISFLI) are cleaved as a propeptide — removed in mature form.

It belongs to the prion family. Monomer and homodimer. Has a tendency to aggregate into amyloid fibrils containing a cross-beta spine, formed by a steric zipper of superposed beta-strands. Soluble oligomers may represent an intermediate stage on the path to fibril formation. Copper binding may promote oligomerization. Interacts with GRB2, APP, ERI3/PRNPIP and SYN1. Mislocalized cytosolically exposed PrP interacts with MGRN1; this interaction alters MGRN1 subcellular location and causes lysosomal enlargement. Interacts with APP. Interacts with KIAA1191. Interacts with ADGRG6.

Its subcellular location is the cell membrane. It localises to the golgi apparatus. In terms of biological role, its primary physiological function is unclear. May play a role in neuronal development and synaptic plasticity. May be required for neuronal myelin sheath maintenance. May promote myelin homeostasis through acting as an agonist for ADGRG6 receptor. May play a role in iron uptake and iron homeostasis. Soluble oligomers are toxic to cultured neuroblastoma cells and induce apoptosis (in vitro). Association with GPC1 (via its heparan sulfate chains) targets PRNP to lipid rafts. Also provides Cu(2+) or Zn(2+) for the ascorbate-mediated GPC1 deaminase degradation of its heparan sulfate side chains. The protein is Major prion protein (PRNP) of Mandrillus sphinx (Mandrill).